An 80-amino-acid polypeptide reads, in one-letter code: Metallothionein-like protein type 2 MET1 (80 aa).

The protein belongs to the metallothionein superfamily. Type 15 family.

Functionally, metallothioneins have a high content of cysteine residues that bind various heavy metals. This Fragaria ananassa (Strawberry) protein is Metallothionein-like protein type 2 MET1 (MET1).